Reading from the N-terminus, the 449-residue chain is Trigger factor (449 aa).

A PPIase FKBP-type domain is found at 172–257 (GDRVTVDFVG…LKQVEWAHLP (86 aa)).

This sequence belongs to the FKBP-type PPIase family. Tig subfamily.

It is found in the cytoplasm. It catalyses the reaction [protein]-peptidylproline (omega=180) = [protein]-peptidylproline (omega=0). In terms of biological role, involved in protein export. Acts as a chaperone by maintaining the newly synthesized protein in an open conformation. Functions as a peptidyl-prolyl cis-trans isomerase. In Ralstonia nicotianae (strain ATCC BAA-1114 / GMI1000) (Ralstonia solanacearum), this protein is Trigger factor.